Consider the following 481-residue polypeptide: Cobyric acid synthase (481 aa).

The GATase cobBQ-type domain occupies 247–433 (AFNVVVPLLP…LHGLFDVPDS (187 aa)). Cys328 functions as the Nucleophile in the catalytic mechanism. His425 is an active-site residue.

This sequence belongs to the CobB/CobQ family. CobQ subfamily.

The protein operates within cofactor biosynthesis; adenosylcobalamin biosynthesis. In terms of biological role, catalyzes amidations at positions B, D, E, and G on adenosylcobyrinic A,C-diamide. NH(2) groups are provided by glutamine, and one molecule of ATP is hydrogenolyzed for each amidation. This Alcanivorax borkumensis (strain ATCC 700651 / DSM 11573 / NCIMB 13689 / SK2) protein is Cobyric acid synthase.